A 554-amino-acid chain; its full sequence is DM7 family protein GG17593 (554 aa).

This sequence belongs to the DM7 family.

The protein is DM7 family protein GG17593 of Drosophila erecta (Fruit fly).